The chain runs to 88 residues: EMBRYO SURROUNDING FACTOR 1-like protein 11 (88 aa).

The signal sequence occupies residues 1 to 23; sequence MISSSHFAIFCIILVSLFALQQY. 4 cysteine pairs are disulfide-bonded: C44/C59, C49/C78, C57/C74, and C60/C67.

It belongs to the MEG family. As to expression, expressed in stems.

The sequence is that of EMBRYO SURROUNDING FACTOR 1-like protein 11 (ESFL11) from Arabidopsis thaliana (Mouse-ear cress).